Consider the following 299-residue polypeptide: Ent-kaurene oxidase-like protein 1 (299 aa).

A helical transmembrane segment spans residues 16-36; the sequence is AVVGVFVAAAVVGGFVAAVAL.

The protein belongs to the cytochrome P450 family. As to expression, expressed in roots and panicles.

Its subcellular location is the membrane. This is Ent-kaurene oxidase-like protein 1 from Oryza sativa subsp. japonica (Rice).